Consider the following 441-residue polypeptide: EMI domain-containing protein 1 (441 aa).

Residues 1-22 (MGGPRAWALLCLGLLLPGGGAA) form the signal peptide. The EMI domain occupies 33-106 (RRNWCSYVVT…PGHSGVSCEE (74 aa)). Intrachain disulfides connect cysteine 37-cysteine 96, cysteine 62-cysteine 68, and cysteine 95-cysteine 104. O-linked (Fuc) threonine glycosylation is present at threonine 42. An N-linked (GlcNAc...) asparagine glycan is attached at asparagine 51. Asparagine 136 carries an N-linked (GlcNAc...) asparagine glycan. Disordered stretches follow at residues 162-371 (QPVP…KSHW) and 405-441 (SGAG…DERG). Composition is skewed to pro residues over residues 163–184 (PVPP…PPAQ) and 222–231 (PPGPQGPPGS). A Collagen-like domain is found at 179 to 368 (GPPPAQGSPG…PGPKGDPGEK (190 aa)). The span at 232–243 (PGRAGAVGTPGE) shows a compositional bias: low complexity. A compositionally biased stretch (pro residues) spans 244–264 (RGPPGPPGPPGPPGPPAPVGP). Over residues 277 to 288 (LSNTFTETNNHW) the composition is skewed to polar residues. Residues 292–311 (PTGPPGPPGPMGPPGPPGPT) are compositionally biased toward pro residues. Basic and acidic residues-rich tracts occupy residues 335 to 344 (PGEKGERGLR) and 359 to 371 (PGPK…KSHW).

In terms of assembly, homo- or heteromers. O-fucosylated at Thr-42 within the EMI domain by FUT10/POFUT3 and FUT11/POFUT4.

It localises to the secreted. It is found in the extracellular space. The protein localises to the extracellular matrix. In Homo sapiens (Human), this protein is EMI domain-containing protein 1 (EMID1).